The primary structure comprises 353 residues: Thrombopoietin (353 aa).

The signal sequence occupies residues 1–21; that stretch reads MELTELLLVVMLLLTARLTLS. S22 carries an O-linked (GalNAc...) serine glycan. 2 cysteine pairs are disulfide-bonded: C28–C172 and C50–C106. T58, T131, T179, and T180 each carry an O-linked (GalNAc...) threonine glycan. S184 carries O-linked (GalNAc...) serine glycosylation. 2 N-linked (GlcNAc...) (complex) asparagine glycosylation sites follow: N197 and N206. A glycan (O-linked (GalNAc...) threonine) is linked at T213. N234 and N255 each carry an N-linked (GlcNAc...) (complex) asparagine glycan. Residues 257–353 form a disordered region; it reads TRGLFPGPSR…THSQNLSQEG (97 aa). Residue S265 is glycosylated (O-linked (GalNAc...) serine). Polar residues predominate over residues 275–304; sequence SSGTSDTGSLPPNLQPGYSPSPTHPPTGQY. Over residues 324-335 the composition is skewed to pro residues; that stretch reads LPDPSAPTPTPT. N-linked (GlcNAc...) asparagine glycosylation is found at N340 and N348. Residues 343–353 show a composition bias toward polar residues; the sequence is YTHSQNLSQEG.

It belongs to the EPO/TPO family. Interacts with MPL/TPOR.

The protein resides in the secreted. In terms of biological role, lineage-specific cytokine affecting the proliferation and maturation of megakaryocytes from their committed progenitor cells. It acts at a late stage of megakaryocyte development. It may be the major physiological regulator of circulating platelets. This is Thrombopoietin (THPO) from Homo sapiens (Human).